Consider the following 119-residue polypeptide: MARVKRGVTAHAKHKKVYKLAKGFRGRRKNTIRAAKAAVDKAGQYAFRDRKRKKRTFRALWIQRINAAVRPLGMTYSVFINGLAKSGVIVDRKVLSDLAITEPAAFQAIAEKAKAALAA.

The protein belongs to the bacterial ribosomal protein bL20 family.

Binds directly to 23S ribosomal RNA and is necessary for the in vitro assembly process of the 50S ribosomal subunit. It is not involved in the protein synthesizing functions of that subunit. This Rhodopseudomonas palustris (strain BisB5) protein is Large ribosomal subunit protein bL20.